The sequence spans 1198 residues: Phosphatidylinositol-3,5-bisphosphate 3-phosphatase MTMR3 (1198 aa).

Serine 8 carries the phosphoserine modification. One can recognise a Myotubularin phosphatase domain in the interval 155–576; the sequence is EHVTSRFKNE…RNLMLWSAVY (422 aa). Residues 265-280 show a composition bias toward polar residues; that stretch reads SRSSGSKLSTRNTSRD. The disordered stretch occupies residues 265 to 285; sequence SRSSGSKLSTRNTSRDFPNGG. The a 1,2-diacyl-sn-glycero-3-phospho-(1D-myo-inositol-3,5-bisphosphate) site is built by asparagine 326, asparagine 351, and isoleucine 352. Residues asparagine 326, asparagine 351, and isoleucine 352 each contribute to the a 1,2-diacyl-sn-glycero-3-phospho-(1D-myo-inositol-3-phosphate) site. The Phosphocysteine intermediate role is filled by cysteine 413. Serine 414, aspartate 415, glycine 416, tryptophan 417, aspartate 418, arginine 419, lysine 455, and arginine 459 together coordinate a 1,2-diacyl-sn-glycero-3-phospho-(1D-myo-inositol-3,5-bisphosphate). A 1,2-diacyl-sn-glycero-3-phospho-(1D-myo-inositol-3-phosphate)-binding residues include serine 414, aspartate 415, glycine 416, tryptophan 417, aspartate 418, and arginine 419. Arginine 459 provides a ligand contact to a 1,2-diacyl-sn-glycero-3-phospho-(1D-myo-inositol-3-phosphate). Residues 590–612 are disordered; that stretch reads CAPYPAPGTSPDDPPLSRLPKTR. Residues 593-603 show a composition bias toward pro residues; it reads YPAPGTSPDDP. Serine 613, serine 633, serine 647, and serine 651 each carry phosphoserine. Disordered stretches follow at residues 650–669, 716–735, and 855–891; these read LSSL…LGKP, EGKE…PEAS, and KSVS…SLVE. A compositionally biased stretch (basic and acidic residues) spans 716–732; that stretch reads EGKEDPLLEKESRRKTP. Threonine 731 is modified (phosphothreonine). Residues serine 906 and serine 909 each carry the phosphoserine modification. 2 disordered regions span residues 933–974 and 993–1019; these read ETEN…SRQL and WLHS…DDDG. A compositionally biased stretch (polar residues) spans 999–1010; the sequence is GRPSATSSPDQP. Residues 1029–1062 adopt a coiled-coil conformation; sequence QRLRQIESGHQQEVETLKKQVQELKSRLESQYLT. Position 1064 is a phosphoserine (serine 1064). An FYVE-type zinc finger spans residues 1119–1179; sequence DHLAAHCYAC…VCKSCYSSLH (61 aa). Positions 1125, 1128, 1141, 1144, 1149, 1152, 1171, and 1174 each coordinate Zn(2+).

It belongs to the protein-tyrosine phosphatase family. Non-receptor class myotubularin subfamily. As to quaternary structure, forms heterodimers with MTMR4 that recruit both CEP55 and PLK1; occurs during early mitosis, regulates the phosphorylation of CEP55 by PLK1 and its recruitment to the midbody where it mediates cell abscission. In terms of processing, phosphorylated by CDK1 during mitosis.

Its subcellular location is the cytoplasm. The protein localises to the cytosol. It is found in the membrane. It carries out the reaction a 1,2-diacyl-sn-glycero-3-phospho-(1D-myo-inositol-3,5-bisphosphate) + H2O = a 1,2-diacyl-sn-glycero-3-phospho-(1D-myo-inositol-5-phosphate) + phosphate. It catalyses the reaction a 1,2-diacyl-sn-glycero-3-phospho-(1D-myo-inositol-3-phosphate) + H2O = a 1,2-diacyl-sn-glycero-3-phospho-(1D-myo-inositol) + phosphate. The catalysed reaction is 1,2-dihexadecanoyl-sn-glycero-3-phospho-(1D-myo-inositol-3-phosphate) + H2O = 1,2-dihexadecanoyl-sn-glycero-3-phospho-(1D-myo-inositol) + phosphate. The enzyme catalyses 1,2-dioctanoyl-sn-glycero-3-phospho-(1-D-myo-inositol-3-phosphate) + H2O = 1,2-dioctanoyl-sn-glycero-3-phospho-(1D-myo-inositol) + phosphate. It carries out the reaction 1,2-dihexadecanoyl-sn-glycero-3-phospho-(1D-myo-inositol-3,5-phosphate) + H2O = 1,2-dihexadecanoyl-sn-glycero-3-phospho-(1D-myo-inositol-5-phosphate) + phosphate. Functionally, lipid phosphatase that specifically dephosphorylates the D-3 position of phosphatidylinositol 3-phosphate and phosphatidylinositol 3,5-bisphosphate, generating phosphatidylinositol and phosphatidylinositol 5-phosphate. Decreases the levels of phosphatidylinositol 3-phosphate, a phospholipid found in cell membranes where it acts as key regulator of both cell signaling and intracellular membrane traffic. Could also have a molecular sequestering/adapter activity and regulate biological processes independently of its phosphatase activity. It includes the regulation of midbody abscission during mitotic cytokinesis. In Homo sapiens (Human), this protein is Phosphatidylinositol-3,5-bisphosphate 3-phosphatase MTMR3.